The sequence spans 416 residues: Gamma-glutamyl phosphate reductase (416 aa).

The protein belongs to the gamma-glutamyl phosphate reductase family.

It is found in the cytoplasm. The catalysed reaction is L-glutamate 5-semialdehyde + phosphate + NADP(+) = L-glutamyl 5-phosphate + NADPH + H(+). The protein operates within amino-acid biosynthesis; L-proline biosynthesis; L-glutamate 5-semialdehyde from L-glutamate: step 2/2. Its function is as follows. Catalyzes the NADPH-dependent reduction of L-glutamate 5-phosphate into L-glutamate 5-semialdehyde and phosphate. The product spontaneously undergoes cyclization to form 1-pyrroline-5-carboxylate. The chain is Gamma-glutamyl phosphate reductase from Vibrio atlanticus (strain LGP32) (Vibrio splendidus (strain Mel32)).